The following is a 163-amino-acid chain: ADP-ribosylation factor-like protein 2-binding protein (163 aa).

Belongs to the ARL2BP family. As to quaternary structure, interacts with GTP bound ARL2 and ARL3; the complex ARL2-ARL2BP as well as ARL2BP alone, binds to SLC25A4/ANT1. Interaction with ARL2 may be required for targeting to cilia basal body. Interacts with STAT3; interaction is enhanced with ARL2. Found in a complex with ARL2BP, ARL2 and SLC25A6. Found in a complex with ARL2, ARL2BP and SLC25A4. Interacts with STAT2, STAT3 and STAT4. As to expression, widely expressed, with most abundant activity in brain, especially in hippocampus and cortex. Also expressed in lung, cerebellum, liver, kidney, retina, spleen, muscle and heart (at protein level).

The protein resides in the cytoplasm. It localises to the mitochondrion intermembrane space. It is found in the cytoskeleton. Its subcellular location is the microtubule organizing center. The protein localises to the centrosome. The protein resides in the nucleus. It localises to the cilium basal body. Together with ARL2, plays a role in the nuclear translocation, retention and transcriptional activity of STAT3. May play a role as an effector of ARL2. The sequence is that of ADP-ribosylation factor-like protein 2-binding protein (Arl2bp) from Mus musculus (Mouse).